A 397-amino-acid polypeptide reads, in one-letter code: Mannitol-1-phosphate 5-dehydrogenase (397 aa).

9–20 lines the NAD(+) pocket; it reads AVHFGAGNIGRG. Residue Lys-220 is part of the active site.

Belongs to the mannitol dehydrogenase family. Monomer.

The catalysed reaction is D-mannitol 1-phosphate + NAD(+) = beta-D-fructose 6-phosphate + NADH + H(+). Its function is as follows. Catalyzes the NAD(H)-dependent interconversion of D-fructose 6-phosphate and D-mannitol 1-phosphate in the mannitol metabolic pathway. This chain is Mannitol-1-phosphate 5-dehydrogenase, found in Podospora anserina (strain S / ATCC MYA-4624 / DSM 980 / FGSC 10383) (Pleurage anserina).